The chain runs to 119 residues: Holo-[acyl-carrier-protein] synthase (119 aa).

Mg(2+)-binding residues include Asp-6 and Glu-51.

It belongs to the P-Pant transferase superfamily. AcpS family. Mg(2+) serves as cofactor.

It is found in the cytoplasm. It carries out the reaction apo-[ACP] + CoA = holo-[ACP] + adenosine 3',5'-bisphosphate + H(+). Transfers the 4'-phosphopantetheine moiety from coenzyme A to a Ser of acyl-carrier-protein. The polypeptide is Holo-[acyl-carrier-protein] synthase (Sulfurovum sp. (strain NBC37-1)).